Reading from the N-terminus, the 331-residue chain is UAP56-interacting factor (331 aa).

Positions 16 to 34 (APDKVDMSLDDIIRLNKKE) match the UAP56-binding motif motif. Disordered regions lie at residues 30-51 (LNKKEQQARRPSPGNRRPLQKG), 63-99 (RARGQTQRGGGVPRGAITRAGVGRGRKIPPPVGRRRG), and 158-193 (GQRRPYRQTDIQRGLNSTRPFQQRRRPLPPVQTQRE). The span at 166–175 (TDIQRGLNST) shows a compositional bias: polar residues.

The protein belongs to the UIF family.

The protein resides in the nucleus. The protein localises to the nucleoplasm. It localises to the nucleus speckle. In terms of biological role, required for mRNA export from the nucleus to the cytoplasm. Acts as an adapter that uses the ddx39b/uap56-nfx1 pathway to ensure efficient mRNA export and delivering to the nuclear pore. The protein is UAP56-interacting factor (fyttd1) of Salmo salar (Atlantic salmon).